An 85-amino-acid polypeptide reads, in one-letter code: Putative membrane protein insertion efficiency factor (85 aa).

The protein belongs to the UPF0161 family.

Its subcellular location is the cell inner membrane. Functionally, could be involved in insertion of integral membrane proteins into the membrane. The polypeptide is Putative membrane protein insertion efficiency factor (Fervidobacterium nodosum (strain ATCC 35602 / DSM 5306 / Rt17-B1)).